A 158-amino-acid polypeptide reads, in one-letter code: Transcription elongation factor GreA (158 aa).

A coiled-coil region spans residues 47 to 74 (AEYHAAKEEQSHNEGRIAELEDKLARAD).

It belongs to the GreA/GreB family.

Functionally, necessary for efficient RNA polymerase transcription elongation past template-encoded arresting sites. The arresting sites in DNA have the property of trapping a certain fraction of elongating RNA polymerases that pass through, resulting in locked ternary complexes. Cleavage of the nascent transcript by cleavage factors such as GreA or GreB allows the resumption of elongation from the new 3'terminus. GreA releases sequences of 2 to 3 nucleotides. The chain is Transcription elongation factor GreA from Nitrobacter winogradskyi (strain ATCC 25391 / DSM 10237 / CIP 104748 / NCIMB 11846 / Nb-255).